A 292-amino-acid chain; its full sequence is AKT-interacting protein (292 aa).

Residues 1 to 11 show a composition bias toward polar residues; sequence MNPFWSMSTSS. Residues 1–63 form a disordered region; that stretch reads MNPFWSMSTS…TSPAPAAQST (63 aa). Basic and acidic residues predominate over residues 14 to 23; the sequence is KRSEGEEKTL. Ser-30 carries the phosphoserine modification. The UBC core domain maps to 74–222; it reads YLEYSLLAEF…VVDSVKVCTA (149 aa).

Belongs to the ubiquitin-conjugating enzyme family. FTS subfamily. In terms of assembly, component of the FTS/Hook/FHIP complex (FHF complex), composed of AKTIP/FTS, FHIP1B, and one or more members of the Hook family of proteins HOOK1, HOOK2, and HOOK3. Interacts directly with HOOK1, HOOK2 and HOOK3. The FHF complex associates with the homotypic vesicular sorting complex (the HOPS complex). Also interacts with AKT1. May interact with FHIP1A.

It is found in the cytoplasm. Its subcellular location is the cell membrane. In terms of biological role, component of the FTS/Hook/FHIP complex (FHF complex). The FHF complex may function to promote vesicle trafficking and/or fusion via the homotypic vesicular protein sorting complex (the HOPS complex). Regulates apoptosis by enhancing phosphorylation and activation of AKT1. Increases release of TNFSF6 via the AKT1/GSK3B/NFATC1 signaling cascade. FHF complex promotes the distribution of AP-4 complex to the perinuclear area of the cell. The polypeptide is AKT-interacting protein (Homo sapiens (Human)).